A 464-amino-acid chain; its full sequence is NAD(P) transhydrogenase subunit beta (464 aa).

6 helical membrane-spanning segments follow: residues 54–74 (VQAY…GTVI), 86–106 (LVAA…TGAL), 126–146 (VEMS…VIAF), 164–184 (HPLN…FAAT), 191–211 (FALM…IGGA), and 227–247 (AAAG…GALV). NADP(+)-binding positions include 316-317 (YG), 348-353 (VAGRMP), 390-394 (GANDV), 425-432 (KRSMASGY), and 451-452 (DA).

Belongs to the PNT beta subunit family. As to quaternary structure, complex of an alpha and a beta chain; in Rhodospirillum, the alpha chain seems to be made of two subunits.

The protein resides in the cell inner membrane. It carries out the reaction NAD(+) + NADPH + H(+)(in) = NADH + NADP(+) + H(+)(out). In terms of biological role, the transhydrogenation between NADH and NADP is coupled to respiration and ATP hydrolysis and functions as a proton pump across the membrane. The protein is NAD(P) transhydrogenase subunit beta (pntB) of Rhodospirillum rubrum (strain ATCC 11170 / ATH 1.1.1 / DSM 467 / LMG 4362 / NCIMB 8255 / S1).